The primary structure comprises 286 residues: Release factor glutamine methyltransferase (286 aa).

S-adenosyl-L-methionine-binding positions include 120 to 124 (GTGSG), Asp143, Trp172, and Asn187. 187–190 (NPPY) serves as a coordination point for substrate.

The protein belongs to the protein N5-glutamine methyltransferase family. PrmC subfamily.

The catalysed reaction is L-glutaminyl-[peptide chain release factor] + S-adenosyl-L-methionine = N(5)-methyl-L-glutaminyl-[peptide chain release factor] + S-adenosyl-L-homocysteine + H(+). Methylates the class 1 translation termination release factors RF1/PrfA and RF2/PrfB on the glutamine residue of the universally conserved GGQ motif. In Gloeobacter violaceus (strain ATCC 29082 / PCC 7421), this protein is Release factor glutamine methyltransferase.